The following is a 701-amino-acid chain: Polyribonucleotide nucleotidyltransferase (701 aa).

Residues D487 and D493 each coordinate Mg(2+). A KH domain is found at 554 to 613 (PTMIAMKIDTDKIRDVIGKGGATIRAICEETKASIDIEDDGSIKIFGETKEAADAAKQRI). One can recognise an S1 motif domain in the interval 623–691 (GKIYVGKVER…NRGRIKLSIK (69 aa)).

The protein belongs to the polyribonucleotide nucleotidyltransferase family. Component of the RNA degradosome, which is a multiprotein complex involved in RNA processing and mRNA degradation. Requires Mg(2+) as cofactor.

Its subcellular location is the cytoplasm. It catalyses the reaction RNA(n+1) + phosphate = RNA(n) + a ribonucleoside 5'-diphosphate. Its function is as follows. Involved in mRNA degradation. Catalyzes the phosphorolysis of single-stranded polyribonucleotides processively in the 3'- to 5'-direction. This is Polyribonucleotide nucleotidyltransferase from Pseudomonas putida (Arthrobacter siderocapsulatus).